Consider the following 391-residue polypeptide: Dual-specificity RNA methyltransferase RlmN (391 aa).

E112 functions as the Proton acceptor in the catalytic mechanism. Residues 118–368 form the Radical SAM core domain; sequence ESDRGTLCIS…VRTPRGRDIL (251 aa). C125 and C371 form a disulfide bridge. [4Fe-4S] cluster is bound by residues C132, C136, and C139. S-adenosyl-L-methionine contacts are provided by residues 197–198, S229, 251–253, and N328; these read GE and SLH. The active-site S-methylcysteine intermediate is the C371.

It belongs to the radical SAM superfamily. RlmN family. [4Fe-4S] cluster serves as cofactor.

It is found in the cytoplasm. The enzyme catalyses adenosine(2503) in 23S rRNA + 2 reduced [2Fe-2S]-[ferredoxin] + 2 S-adenosyl-L-methionine = 2-methyladenosine(2503) in 23S rRNA + 5'-deoxyadenosine + L-methionine + 2 oxidized [2Fe-2S]-[ferredoxin] + S-adenosyl-L-homocysteine. It catalyses the reaction adenosine(37) in tRNA + 2 reduced [2Fe-2S]-[ferredoxin] + 2 S-adenosyl-L-methionine = 2-methyladenosine(37) in tRNA + 5'-deoxyadenosine + L-methionine + 2 oxidized [2Fe-2S]-[ferredoxin] + S-adenosyl-L-homocysteine. Functionally, specifically methylates position 2 of adenine 2503 in 23S rRNA and position 2 of adenine 37 in tRNAs. m2A2503 modification seems to play a crucial role in the proofreading step occurring at the peptidyl transferase center and thus would serve to optimize ribosomal fidelity. This is Dual-specificity RNA methyltransferase RlmN from Beijerinckia indica subsp. indica (strain ATCC 9039 / DSM 1715 / NCIMB 8712).